A 304-amino-acid polypeptide reads, in one-letter code: Coenzyme PQQ synthesis protein B (304 aa).

Belongs to the PqqB family.

It functions in the pathway cofactor biosynthesis; pyrroloquinoline quinone biosynthesis. Its function is as follows. May be involved in the transport of PQQ or its precursor to the periplasm. This chain is Coenzyme PQQ synthesis protein B, found in Pseudomonas aeruginosa (strain LESB58).